We begin with the raw amino-acid sequence, 27 residues long: Phospholipase A2 2 (27 aa).

The tract at residues 1 to 27 (FMKVIDPGTKWCGPGNKAADDTDNGKN) is disordered. 3 residues coordinate Ca(2+): W11, G13, and G15. The span at 18–27 (AADDTDNGKN) shows a compositional bias: basic and acidic residues.

The protein belongs to the phospholipase A2 family. Requires Ca(2+) as cofactor. Expressed by the venom gland.

The protein localises to the secreted. It carries out the reaction a 1,2-diacyl-sn-glycero-3-phosphocholine + H2O = a 1-acyl-sn-glycero-3-phosphocholine + a fatty acid + H(+). Functionally, PLA2 catalyzes the calcium-dependent hydrolysis of the 2-acyl groups in 3-sn-phosphoglycerides. The sequence is that of Phospholipase A2 2 from Opisthacanthus cayaporum (South American scorpion).